Consider the following 370-residue polypeptide: MREETAEQPAPLRSGLTTGSCATATSLAAARLLLCGQVSDAVEIVLPKGKQVQMRLEFCRLVDNFAEAATLKDAGDDPDVTHGALVFARVRLQAAAGVRFLAGAGVGTVTRPGLVLAVGEPAINPVPRRMMTEHLLQLAEEQGYSGGFEVTIGVEGGEALALKTMNPRLGILGGLSILGTSGIVRPFSCAAYIASIHQGIDVATTNGYRHIAACTGNASEDTMRRVYKIPDIALIEMGDFVGAVLKHLRRVSVDKLSVCGGFGKISKLAAGHMDLHSRHSSIDLPQLARWAADVGADAGLQQQILAANTSQQALAMSAAAGVPLGDEVCRHALNFARSIVPASVQVEVFAIDRQGGLVGQAGVDSQREIT.

It belongs to the CbiD family.

The catalysed reaction is Co-precorrin-5B + S-adenosyl-L-methionine = Co-precorrin-6A + S-adenosyl-L-homocysteine. Its pathway is cofactor biosynthesis; adenosylcobalamin biosynthesis; cob(II)yrinate a,c-diamide from sirohydrochlorin (anaerobic route): step 6/10. In terms of biological role, catalyzes the methylation of C-1 in cobalt-precorrin-5B to form cobalt-precorrin-6A. The protein is Cobalt-precorrin-5B C(1)-methyltransferase of Pseudomonas syringae pv. syringae (strain B728a).